Reading from the N-terminus, the 91-residue chain is Small ribosomal subunit protein bS18 (91 aa).

The tract at residues 1 to 27 (MTQQSNTERKPRAKGPKRPRKPKVDPF) is disordered. The span at 11–21 (PRAKGPKRPRK) shows a compositional bias: basic residues.

The protein belongs to the bacterial ribosomal protein bS18 family. As to quaternary structure, part of the 30S ribosomal subunit. Forms a tight heterodimer with protein bS6.

Functionally, binds as a heterodimer with protein bS6 to the central domain of the 16S rRNA, where it helps stabilize the platform of the 30S subunit. This Deinococcus geothermalis (strain DSM 11300 / CIP 105573 / AG-3a) protein is Small ribosomal subunit protein bS18.